We begin with the raw amino-acid sequence, 193 residues long: Orotate phosphoribosyltransferase (193 aa).

Glu114–Ser122 is a 5-phospho-alpha-D-ribose 1-diphosphate binding site. Residues Thr118 and Arg146 each contribute to the orotate site.

This sequence belongs to the purine/pyrimidine phosphoribosyltransferase family. PyrE subfamily. In terms of assembly, homodimer. The cofactor is Mg(2+).

The catalysed reaction is orotidine 5'-phosphate + diphosphate = orotate + 5-phospho-alpha-D-ribose 1-diphosphate. The protein operates within pyrimidine metabolism; UMP biosynthesis via de novo pathway; UMP from orotate: step 1/2. In terms of biological role, catalyzes the transfer of a ribosyl phosphate group from 5-phosphoribose 1-diphosphate to orotate, leading to the formation of orotidine monophosphate (OMP). In Chlorobaculum parvum (strain DSM 263 / NCIMB 8327) (Chlorobium vibrioforme subsp. thiosulfatophilum), this protein is Orotate phosphoribosyltransferase.